A 190-amino-acid polypeptide reads, in one-letter code: Holliday junction branch migration complex subunit RuvA (190 aa).

The interval 1-64 is domain I; the sequence is MIGKLTGTLL…EDAQLLYGFG (64 aa). Residues 65–137 are domain II; sequence TAQERQAFRE…LKGKLGADVG (73 aa). Residues 137-141 form a flexible linker region; sequence GVRAH. The segment at 142–190 is domain III; it reads AANDNQADILQALLALGYNDKEAAAALKALPADVGVSEGIKLALKSLSK.

Belongs to the RuvA family. As to quaternary structure, homotetramer. Forms an RuvA(8)-RuvB(12)-Holliday junction (HJ) complex. HJ DNA is sandwiched between 2 RuvA tetramers; dsDNA enters through RuvA and exits via RuvB. An RuvB hexamer assembles on each DNA strand where it exits the tetramer. Each RuvB hexamer is contacted by two RuvA subunits (via domain III) on 2 adjacent RuvB subunits; this complex drives branch migration. In the full resolvosome a probable DNA-RuvA(4)-RuvB(12)-RuvC(2) complex forms which resolves the HJ.

It is found in the cytoplasm. Functionally, the RuvA-RuvB-RuvC complex processes Holliday junction (HJ) DNA during genetic recombination and DNA repair, while the RuvA-RuvB complex plays an important role in the rescue of blocked DNA replication forks via replication fork reversal (RFR). RuvA specifically binds to HJ cruciform DNA, conferring on it an open structure. The RuvB hexamer acts as an ATP-dependent pump, pulling dsDNA into and through the RuvAB complex. HJ branch migration allows RuvC to scan DNA until it finds its consensus sequence, where it cleaves and resolves the cruciform DNA. The sequence is that of Holliday junction branch migration complex subunit RuvA from Acidovorax ebreus (strain TPSY) (Diaphorobacter sp. (strain TPSY)).